We begin with the raw amino-acid sequence, 152 residues long: MAVYKVVEIGDPILKEIAKPIKEITPNIIKLLENMADTMYAYNGVGLAAPQIGVSKRAIVVDVGEGLIELINPEIIEVSGEEKDIEGCLSVPGVQGEVVRAKKVTVKGLNRYGEEIVIPAEGLLARAFQHEIDHLNGILFVEKADNIVRKGR.

Residues Cys88 and His130 each coordinate Fe cation. The active site involves Glu131. Fe cation is bound at residue His134.

The protein belongs to the polypeptide deformylase family. The cofactor is Fe(2+).

It carries out the reaction N-terminal N-formyl-L-methionyl-[peptide] + H2O = N-terminal L-methionyl-[peptide] + formate. Removes the formyl group from the N-terminal Met of newly synthesized proteins. Requires at least a dipeptide for an efficient rate of reaction. N-terminal L-methionine is a prerequisite for activity but the enzyme has broad specificity at other positions. This Carboxydothermus hydrogenoformans (strain ATCC BAA-161 / DSM 6008 / Z-2901) protein is Peptide deformylase.